The chain runs to 434 residues: Double-stranded RNA-binding protein 2 (434 aa).

DRBM domains lie at 1 to 70 (MYKN…ALSN) and 87 to 155 (VYKN…SLKQ). The segment at 402–434 (EKTASKETERAEFKDSSKGEPETARERLENLKI) is disordered.

In terms of assembly, heterodimer with DRB1 or DRB5. Interacts with DCL1 and DCL5.

The protein resides in the cytoplasm. Binds double-stranded RNA. May be involved in RNA-mediated silencing. This chain is Double-stranded RNA-binding protein 2 (DRB2), found in Arabidopsis thaliana (Mouse-ear cress).